The chain runs to 155 residues: Ribosome maturation factor RimP (155 aa).

This sequence belongs to the RimP family.

It is found in the cytoplasm. Required for maturation of 30S ribosomal subunits. This Synechococcus sp. (strain RCC307) protein is Ribosome maturation factor RimP.